The chain runs to 853 residues: Thrombospondin type-1 domain-containing protein 1 (853 aa).

Residues 1 to 24 (MKPMLKDFSNLLLVVLCDYVLGEA) form the signal peptide. Residues 25–414 (EYLLLREPGH…QPQGPVKSNN (390 aa)) are Extracellular-facing. Asparagine 39, asparagine 53, asparagine 58, asparagine 69, asparagine 80, asparagine 135, and asparagine 304 each carry an N-linked (GlcNAc...) asparagine glycan. The TSP type-1 domain maps to 341–394 (IETWGLWQPWSQCSATCGDGVRERRRVCLTSFPSRPGCPGMSLEASLCSLEECA). Intrachain disulfides connect cysteine 353–cysteine 388, cysteine 357–cysteine 393, and cysteine 368–cysteine 378. The chain crosses the membrane as a helical span at residues 415 to 435 (IVTVTGISLCLFIIIATVLIT). Residues 436–853 (LWRRFGRPAK…STLSVEKLVI (418 aa)) lie on the Cytoplasmic side of the membrane. 4 disordered regions span residues 445 to 518 (KCST…ESFQ), 624 to 650 (TLIRKSQARHVGSRGGPSERSHARNAH), 668 to 702 (ERSMSTLTPRQAPAYSTRTRTCEQAEDRFRPQSRG), and 714 to 800 (QEAS…RKDK). Position 464 is a phosphoserine (serine 464). A compositionally biased stretch (polar residues) spans 671–686 (MSTLTPRQAPAYSTRT). The span at 687–697 (RTCEQAEDRFR) shows a compositional bias: basic and acidic residues. Polar residues predominate over residues 767-795 (SHKSVSRKQSSPTSPKDSYQRVSPLSPSQ).

Part of a complex composed of THSD1, PTK2/FAK1, TLN1 and VCL. Interacts with TLN1.

It is found in the endosome membrane. The protein resides in the cell junction. The protein localises to the focal adhesion. In terms of biological role, is a positive regulator of nascent focal adhesion assembly, involved in the modulation of endothelial cell attachment to the extracellular matrix. The polypeptide is Thrombospondin type-1 domain-containing protein 1 (THSD1) (Pongo abelii (Sumatran orangutan)).